Reading from the N-terminus, the 345-residue chain is MNPLINFILLSSMIAGTILTTTSHHWVSAWLGLELNTLAIIPIISMTHHPRATEASTKYFLIQAASSALVLLSGIINAHLHGSWDISQLSDNFSKIALTTALATKLGLAPIHFWLPEILQGVPILTALIIATWQKIAPMALLIMIWDLIPTPITLIMGLTSTIVGGLGGLNQTQLRKTMAFSSIAHLGWMITMMTIAPNLTLLNLILYIPMTSLTMLIMHLTMSKTLQNAMLIPSHSLTATSLFLLSLLSLGGLPPLSGFIPKWLILQELTIHNLTPMAFMMAITALLSLMFYLRITYISTMTLPPSTTPLKNTWRFKSHQNTSTLPLLSLISIFLLPITPTLTQ.

10 consecutive transmembrane segments (helical) span residues 1-21, 26-46, 60-80, 96-115, 122-144, 148-170, 201-223, 242-262, 274-294, and 323-343; these read MNPLINFILLSSMIAGTILTT, WVSAWLGLELNTLAIIPIISM, FLIQAASSALVLLSGIINAHL, IALTTALATKLGLAPIHFWL, VPILTALIIATWQKIAPMALLIM, LIPTPITLIMGLTSTIVGGLGGL, TLLNLILYIPMTSLTMLIMHLTM, SLFLLSLLSLGGLPPLSGFIP, NLTPMAFMMAITALLSLMFYL, and TSTLPLLSLISIFLLPITPTL.

Belongs to the complex I subunit 2 family.

The protein localises to the mitochondrion inner membrane. The catalysed reaction is a ubiquinone + NADH + 5 H(+)(in) = a ubiquinol + NAD(+) + 4 H(+)(out). Its function is as follows. Core subunit of the mitochondrial membrane respiratory chain NADH dehydrogenase (Complex I) that is believed to belong to the minimal assembly required for catalysis. Complex I functions in the transfer of electrons from NADH to the respiratory chain. The immediate electron acceptor for the enzyme is believed to be ubiquinone. The polypeptide is NADH-ubiquinone oxidoreductase chain 2 (MT-ND2) (Varanus nebulosus (Clouded monitor)).